Here is a 390-residue protein sequence, read N- to C-terminus: Methylthioribose-1-phosphate isomerase (390 aa).

D263 serves as the catalytic Proton donor.

The protein belongs to the eIF-2B alpha/beta/delta subunits family. MtnA subfamily.

Its subcellular location is the cytoplasm. The protein localises to the nucleus. It catalyses the reaction 5-(methylsulfanyl)-alpha-D-ribose 1-phosphate = 5-(methylsulfanyl)-D-ribulose 1-phosphate. The protein operates within amino-acid biosynthesis; L-methionine biosynthesis via salvage pathway; L-methionine from S-methyl-5-thio-alpha-D-ribose 1-phosphate: step 1/6. In terms of biological role, catalyzes the interconversion of methylthioribose-1-phosphate (MTR-1-P) into methylthioribulose-1-phosphate (MTRu-1-P). The polypeptide is Methylthioribose-1-phosphate isomerase (Meyerozyma guilliermondii (strain ATCC 6260 / CBS 566 / DSM 6381 / JCM 1539 / NBRC 10279 / NRRL Y-324) (Yeast)).